A 747-amino-acid polypeptide reads, in one-letter code: Probable copper-transporting ATPase PacS (747 aa).

Over 1 to 101 the chain is Cytoplasmic; that stretch reads MVNQQTLTLR…RQLAQRVWVS (101 aa). The HMA domain occupies 3 to 69; the sequence is NQQTLTLRGM…AIEAAGYHAF (67 aa). Positions 14 and 17 each coordinate a metal cation. A helical membrane pass occupies residues 102–122; that stretch reads GLIASLLVIGSLPMMLGISIP. Residues 123 to 132 lie on the Extracellular side of the membrane; that stretch reads GIPMWLHHPG. The chain crosses the membrane as a helical span at residues 133–151; it reads LQLGLTLPVLWAGRSFFIN. The Cytoplasmic portion of the chain corresponds to 152–158; sequence AWKAFRQ. The helical transmembrane segment at 159–179 threads the bilayer; sequence NTATMDTLVAVGTGAAFLYSL. At 180–199 the chain is on the extracellular side; it reads AVTLFPQWLTRQGLPPDVYY. The helical transmembrane segment at 200–220 threads the bilayer; the sequence is EAIAVIIALLLLGRSLEERAK. The Cytoplasmic portion of the chain corresponds to 221–348; the sequence is GQTSAAIRQL…KAPIQRLADQ (128 aa). A helical transmembrane segment spans residues 349–371; it reads VTGWFVPAVIAIAILTFVLWFNW. Residues 372–378 are Extracellular-facing; the sequence is IGNVTLA. Residues 379–396 traverse the membrane as a helical segment; the sequence is LITAVGVLIIACPCALGL. Residues 397 to 688 lie on the Cytoplasmic side of the membrane; it reads ATPTSIMVGT…QLSRATMTNI (292 aa). The active-site 4-aspartylphosphate intermediate is D434. Positions 634 and 638 each coordinate Mg(2+). The chain crosses the membrane as a helical span at residues 689–708; the sequence is RQNLFFAFIYNVAGIPIAAG. Topologically, residues 709–720 are extracellular; sequence ILYPLLGWLLSP. A helical transmembrane segment spans residues 721 to 739; sequence MLAGAAMAFSSVSVVTNAL. The Cytoplasmic segment spans residues 740 to 747; it reads RLRQFQPR.

Belongs to the cation transport ATPase (P-type) (TC 3.A.3) family. Type IB subfamily.

The protein localises to the cell membrane. It catalyses the reaction Cu(+)(in) + ATP + H2O = Cu(+)(out) + ADP + phosphate + H(+). Functionally, may play a role in the osmotic adaptation. This Synechococcus elongatus (strain ATCC 33912 / PCC 7942 / FACHB-805) (Anacystis nidulans R2) protein is Probable copper-transporting ATPase PacS (pacS).